A 466-amino-acid chain; its full sequence is Ribulose bisphosphate carboxylase/oxygenase activase, chloroplastic (466 aa).

The transit peptide at 1 to 48 (MAAAFSSTVGAPASTPTNFLGKKLKKQVTSAVNYHGKSSNINRFKVMA) directs the protein to the chloroplast. An ATP-binding site is contributed by 156 to 163 (GGKGQGKS). Residues 429-454 (QGAQQAGNLPVPEGCTDPVAKNFDPT) form a disordered region.

This sequence belongs to the RuBisCO activase family.

It localises to the plastid. Its subcellular location is the chloroplast stroma. In terms of biological role, activation of RuBisCO (ribulose-1,5-bisphosphate carboxylase/oxygenase; EC 4.1.1.39) involves the ATP-dependent carboxylation of the epsilon-amino group of lysine leading to a carbamate structure. This is Ribulose bisphosphate carboxylase/oxygenase activase, chloroplastic (RCA) from Oryza sativa subsp. japonica (Rice).